Reading from the N-terminus, the 647-residue chain is Threonine--tRNA ligase (647 aa).

In terms of domain architecture, TGS spans 1-61 (MIKITFPDGA…EEDGSIEIVT (61 aa)). A catalytic region spans residues 240 to 538 (DHRKLGKELD…LIETYKGAFP (299 aa)). Zn(2+) contacts are provided by C334, H385, and H515.

This sequence belongs to the class-II aminoacyl-tRNA synthetase family. In terms of assembly, homodimer. Zn(2+) is required as a cofactor.

The protein localises to the cytoplasm. The enzyme catalyses tRNA(Thr) + L-threonine + ATP = L-threonyl-tRNA(Thr) + AMP + diphosphate + H(+). Its function is as follows. Catalyzes the attachment of threonine to tRNA(Thr) in a two-step reaction: L-threonine is first activated by ATP to form Thr-AMP and then transferred to the acceptor end of tRNA(Thr). Also edits incorrectly charged L-seryl-tRNA(Thr). In Streptococcus pyogenes serotype M1, this protein is Threonine--tRNA ligase.